The primary structure comprises 259 residues: Thiazole synthase (259 aa).

Residue K100 is the Schiff-base intermediate with DXP of the active site. Residues G161, 187 to 188 (AG), and 209 to 210 (NT) each bind 1-deoxy-D-xylulose 5-phosphate.

The protein belongs to the ThiG family. As to quaternary structure, homotetramer. Forms heterodimers with either ThiH or ThiS.

Its subcellular location is the cytoplasm. It catalyses the reaction [ThiS sulfur-carrier protein]-C-terminal-Gly-aminoethanethioate + 2-iminoacetate + 1-deoxy-D-xylulose 5-phosphate = [ThiS sulfur-carrier protein]-C-terminal Gly-Gly + 2-[(2R,5Z)-2-carboxy-4-methylthiazol-5(2H)-ylidene]ethyl phosphate + 2 H2O + H(+). Its pathway is cofactor biosynthesis; thiamine diphosphate biosynthesis. Functionally, catalyzes the rearrangement of 1-deoxy-D-xylulose 5-phosphate (DXP) to produce the thiazole phosphate moiety of thiamine. Sulfur is provided by the thiocarboxylate moiety of the carrier protein ThiS. In vitro, sulfur can be provided by H(2)S. The sequence is that of Thiazole synthase from Methylobacillus flagellatus (strain ATCC 51484 / DSM 6875 / VKM B-1610 / KT).